The primary structure comprises 357 residues: UDP-N-acetylglucosamine--N-acetylmuramyl-(pentapeptide) pyrophosphoryl-undecaprenol N-acetylglucosamine transferase (357 aa).

UDP-N-acetyl-alpha-D-glucosamine contacts are provided by residues 13–15 (TGG), asparagine 122, arginine 163, serine 191, and glutamine 288.

This sequence belongs to the glycosyltransferase 28 family. MurG subfamily.

It localises to the cell inner membrane. It catalyses the reaction di-trans,octa-cis-undecaprenyl diphospho-N-acetyl-alpha-D-muramoyl-L-alanyl-D-glutamyl-meso-2,6-diaminopimeloyl-D-alanyl-D-alanine + UDP-N-acetyl-alpha-D-glucosamine = di-trans,octa-cis-undecaprenyl diphospho-[N-acetyl-alpha-D-glucosaminyl-(1-&gt;4)]-N-acetyl-alpha-D-muramoyl-L-alanyl-D-glutamyl-meso-2,6-diaminopimeloyl-D-alanyl-D-alanine + UDP + H(+). Its pathway is cell wall biogenesis; peptidoglycan biosynthesis. Cell wall formation. Catalyzes the transfer of a GlcNAc subunit on undecaprenyl-pyrophosphoryl-MurNAc-pentapeptide (lipid intermediate I) to form undecaprenyl-pyrophosphoryl-MurNAc-(pentapeptide)GlcNAc (lipid intermediate II). The sequence is that of UDP-N-acetylglucosamine--N-acetylmuramyl-(pentapeptide) pyrophosphoryl-undecaprenol N-acetylglucosamine transferase from Gloeobacter violaceus (strain ATCC 29082 / PCC 7421).